A 650-amino-acid polypeptide reads, in one-letter code: Glycoprotein 105 (650 aa).

A helical; Signal-anchor for type II membrane protein membrane pass occupies residues 1–32 (MATARLGVMRPPRSCALIFLCAFSMATAPTNA). Topologically, residues 33-650 (TAHRRAGTVK…RFPHVGIGSY (618 aa)) are virion surface. N-linked (GlcNAc...) asparagine; by host glycans are attached at residues Asn52, Asn290, Asn332, Asn338, Asn359, Asn422, Asn516, and Asn552.

In terms of assembly, associates with the gp82-gp105 complex. Post-translationally, N-Glycosylated.

Its subcellular location is the virion membrane. The sequence is that of Glycoprotein 105 (U96/U97/U98/U99/U100) from Homo sapiens (Human).